The sequence spans 445 residues: Tubulin beta chain (445 aa).

Residues Q11, E69, S138, G142, T143, G144, N204, and N226 each contribute to the GTP site. E69 is a Mg(2+) binding site.

The protein belongs to the tubulin family. As to quaternary structure, dimer of alpha and beta chains. A typical microtubule is a hollow water-filled tube with an outer diameter of 25 nm and an inner diameter of 15 nM. Alpha-beta heterodimers associate head-to-tail to form protofilaments running lengthwise along the microtubule wall with the beta-tubulin subunit facing the microtubule plus end conferring a structural polarity. Microtubules usually have 13 protofilaments but different protofilament numbers can be found in some organisms and specialized cells. Requires Mg(2+) as cofactor.

It localises to the cytoplasm. Its subcellular location is the cytoskeleton. Functionally, tubulin is the major constituent of microtubules, a cylinder consisting of laterally associated linear protofilaments composed of alpha- and beta-tubulin heterodimers. Microtubules grow by the addition of GTP-tubulin dimers to the microtubule end, where a stabilizing cap forms. Below the cap, tubulin dimers are in GDP-bound state, owing to GTPase activity of alpha-tubulin. In Leishmania mexicana, this protein is Tubulin beta chain.